A 145-amino-acid polypeptide reads, in one-letter code: Transcription antitermination protein NusB (145 aa).

This sequence belongs to the NusB family.

Its function is as follows. Involved in transcription antitermination. Required for transcription of ribosomal RNA (rRNA) genes. Binds specifically to the boxA antiterminator sequence of the ribosomal RNA (rrn) operons. This chain is Transcription antitermination protein NusB, found in Geotalea uraniireducens (strain Rf4) (Geobacter uraniireducens).